A 468-amino-acid chain; its full sequence is MSSSLWLQCLQRLQEELPSAEFSMWVRPLQAELNDNTLTLFAPNRFVLDWVRDKYLNSINSLLNEFCGGDIPTLRFEVGSKPISAPPRPQRTAADVAAATSAPAQMQARQSLHKPWESRGPEPVDDLNHRSNVNPKHKFTNFVEGKSNQLGLAAARQVSDNPGTAYNPLFLYGGTGLGKTHLLQAVGNAILERKPNAKVVYMHSERFVQDMVKALQNNAIEEFKCYYRSVDALLIDDIQFFANKERSQEEFFHTFNALLEGNQQIILTSDRYPKEINGVEDRLKSRFGWGLTVAIEPPELETRVAILMKKAEDHQIHLADEVAFFIAKRLRSNVRELEGALNRVVANANFTGRAITIDFVREALRDLLALQEKLVTIDNIQKTVAEYYKIKMADLLSKRRSRSVARPRQLAMALSKELTNHSLPEIGDAFGGRDHTTVLHACRKIAQLREESHDIKEDYSNLIRTLSS.

Residues Met1 to Ser84 are domain I, interacts with DnaA modulators. Residues Ser84–Ser131 form a domain II region. Residues Leu112–Asn132 form a disordered region. Residues Lys114–His129 are compositionally biased toward basic and acidic residues. The segment at Asn132 to Ala348 is domain III, AAA+ region. ATP-binding residues include Gly176, Gly178, Lys179, and Thr180. The domain IV, binds dsDNA stretch occupies residues Asn349–Ser468.

Belongs to the DnaA family. As to quaternary structure, oligomerizes as a right-handed, spiral filament on DNA at oriC.

It is found in the cytoplasm. Its function is as follows. Plays an essential role in the initiation and regulation of chromosomal replication. ATP-DnaA binds to the origin of replication (oriC) to initiate formation of the DNA replication initiation complex once per cell cycle. Binds the DnaA box (a 9 base pair repeat at the origin) and separates the double-stranded (ds)DNA. Forms a right-handed helical filament on oriC DNA; dsDNA binds to the exterior of the filament while single-stranded (ss)DNA is stabiized in the filament's interior. The ATP-DnaA-oriC complex binds and stabilizes one strand of the AT-rich DNA unwinding element (DUE), permitting loading of DNA polymerase. After initiation quickly degrades to an ADP-DnaA complex that is not apt for DNA replication. Binds acidic phospholipids. The sequence is that of Chromosomal replication initiator protein DnaA from Aliivibrio salmonicida (strain LFI1238) (Vibrio salmonicida (strain LFI1238)).